Here is a 212-residue protein sequence, read N- to C-terminus: Methylthioribulose-1-phosphate dehydratase (212 aa).

Residues His97 and His99 each coordinate Zn(2+).

It belongs to the aldolase class II family. MtnB subfamily. In terms of assembly, homotetramer. Requires Zn(2+) as cofactor.

The catalysed reaction is 5-(methylsulfanyl)-D-ribulose 1-phosphate = 5-methylsulfanyl-2,3-dioxopentyl phosphate + H2O. It functions in the pathway amino-acid biosynthesis; L-methionine biosynthesis via salvage pathway; L-methionine from S-methyl-5-thio-alpha-D-ribose 1-phosphate: step 2/6. Catalyzes the dehydration of methylthioribulose-1-phosphate (MTRu-1-P) into 2,3-diketo-5-methylthiopentyl-1-phosphate (DK-MTP-1-P). This chain is Methylthioribulose-1-phosphate dehydratase, found in Bacillus cereus (strain B4264).